Reading from the N-terminus, the 289-residue chain is MANLKEIRAKVASIKSTQKITRAMQMVAASKMRRAQERMAQGRPYADNMRRVIAHLVQANPEYKHRYMVDRPVKRVGYIVVSSDRGLAGGLNINLFKKVVQHVKAQREQSIEVEFALIGQKAVSFFKNYGGKVLGATTQLGDAPSLEQLTGSVQVMLDAFDKGELDRIYLVSNGFVNAMTQQPKVEQLVPLAPAAEGDDLNRTYGWDYIYEPEAEQLLNGLLVRYIESMVYQGVIENVACEQSARMVAMKAATDNAGQLIKDLQLIYNKLRQAAITQEISEIVGGAAAV.

Belongs to the ATPase gamma chain family. In terms of assembly, F-type ATPases have 2 components, CF(1) - the catalytic core - and CF(0) - the membrane proton channel. CF(1) has five subunits: alpha(3), beta(3), gamma(1), delta(1), epsilon(1). CF(0) has three main subunits: a, b and c.

The protein resides in the cell inner membrane. Its function is as follows. Produces ATP from ADP in the presence of a proton gradient across the membrane. The gamma chain is believed to be important in regulating ATPase activity and the flow of protons through the CF(0) complex. The sequence is that of ATP synthase gamma chain from Acinetobacter baylyi (strain ATCC 33305 / BD413 / ADP1).